The following is a 747-amino-acid chain: Probable alpha-galactosidase C (747 aa).

An N-terminal signal peptide occupies residues 1–24 (MVAFMNSATFVAGLFTLWSRPIWA). N-linked (GlcNAc...) asparagine glycosylation is found at Asn-36, Asn-182, Asn-190, Asn-362, Asn-429, and Asn-449. Asp-507 (nucleophile) is an active-site residue. N-linked (GlcNAc...) asparagine glycosylation is present at Asn-534. Asp-569 functions as the Proton donor in the catalytic mechanism.

This sequence belongs to the glycosyl hydrolase 36 family. Homotetramer. Mg(2+) is required as a cofactor. Requires NAD(+) as cofactor.

The protein localises to the secreted. It catalyses the reaction Hydrolysis of terminal, non-reducing alpha-D-galactose residues in alpha-D-galactosides, including galactose oligosaccharides, galactomannans and galactolipids.. Hydrolyzes a variety of simple alpha-D-galactoside as well as more complex molecules such as oligosaccharides and polysaccharides. The polypeptide is Probable alpha-galactosidase C (aglC) (Aspergillus terreus (strain NIH 2624 / FGSC A1156)).